The primary structure comprises 240 residues: MVVTDSPVSGIMADQNIDPNTTTSPSPKEKHVSAIKAISGDEKAPSKEKKNYASKKSTTVIQKSHCFQNSWTFWFDNPSSKSNQVIWGSSLRSLYTFGTIEEFWSLYNNIHPPTKWVSGADLYCFKDKIEPKWEDPICANGGKWSMMFPKATLECNWLNTLLALVGEQFDQGDEICGAVLNFRARGDRISLWTKNAANEEAQLSIGKQWKELLGYNETIGFIVHEDAKTLDRDAKRRYTV.

Residues M1–N51 form a disordered region. Positions I17–S26 are enriched in polar residues. A compositionally biased stretch (basic and acidic residues) spans S39 to N51. EIF4G-binding regions lie at residues H65–Q68 and F75–H111. MRNA is bound by residues N83–G88, K115, and W133–E134. C138 and C176 are disulfide-bonded. The EIF4G-binding stretch occupies residues N159–Q168. MRNA contacts are provided by residues R183–R188 and K228–R232.

It belongs to the eukaryotic initiation factor 4E family. In terms of assembly, EIF4F is a multi-subunit complex, the composition of which varies with external and internal environmental conditions. It is composed of at least EIF4A, EIF4E and EIF4G. EIF4E is also known to interact with other partners. In higher plants two isoforms of EIF4F have been identified, named isoform EIF4F and isoform EIF(iso)4F. Isoform EIF4F has subunits p220 and p26, whereas isoform EIF(iso)4F has subunits p82 and p28. According to the redox status, the Cys-138-Cys-176 disulfide bridge may have a role in regulating protein function by affecting its ability to bind capped mRNA.

Its subcellular location is the nucleus. The protein localises to the cytoplasm. Functionally, component of the protein complex eIF4F, which is involved in the recognition of the mRNA cap, ATP-dependent unwinding of 5'-terminal secondary structure and recruitment of mRNA to the ribosome. Recognizes and binds the 7-methylguanosine-containing mRNA cap during an early step in the initiation of protein synthesis and facilitates ribosome binding by inducing the unwinding of the mRNAs secondary structures. The chain is Eukaryotic translation initiation factor 4E-3 from Arabidopsis thaliana (Mouse-ear cress).